The following is a 422-amino-acid chain: Killer cell immunoglobulin-like receptor 3DL1 (422 aa).

The signal sequence occupies residues 1–21 (MMFEFLSLLCSGFFLVQRMSA). Topologically, residues 22-329 (HMGSYDKPFL…KNLHIQIGLL (308 aa)) are extracellular. Ig-like C2-type domains follow at residues 42–100 (GQNV…HHQY), 135–202 (GENV…YNHS), and 237–300 (EQNM…FKNS). Asparagine 44 is a glycosylation site (N-linked (GlcNAc...) asparagine). A disulfide bond links cysteine 49 and cysteine 95. N-linked (GlcNAc...) asparagine glycosylation is present at asparagine 137. Cysteine 142 and cysteine 195 are disulfide-bonded. N-linked (GlcNAc...) asparagine glycosylation is found at asparagine 200 and asparagine 239. Cysteine 244 and cysteine 293 are joined by a disulfide. Asparagine 299 carries an N-linked (GlcNAc...) asparagine glycan. A helical membrane pass occupies residues 330 to 350 (VTMVLVIVVIIIIIIIIIIII). The Cytoplasmic portion of the chain corresponds to 351 to 422 (YYYYFSKKSS…DTVVYTEVMI (72 aa)).

The protein belongs to the immunoglobulin superfamily.

The protein localises to the cell membrane. Receptor on natural killer (NK) cells. Inhibits the activity of NK cells thus preventing cell lysis. The polypeptide is Killer cell immunoglobulin-like receptor 3DL1 (Kir3dl1) (Rattus norvegicus (Rat)).